The primary structure comprises 352 residues: MKPALLEVMRMNRICRMVLATCLGSFILVIFYFQSMLHPVMRRNPFGVDICCRKGSRSPLQELYNPIQLELSNTAILHQMRRDQVTDTCRANSAMSRKRRVLTPNDLKHLVVDEDHELIYCYVPKVACTNWKRLMMVLSGRGKYSDPMEIPANEAHVSANLKTLNQYSIPEINHRLKSYMKFLFVREPFERLVSAYRNKFTQKYNTSFHKRYGTKIIRRQRKNATQEALRKGDDVKFEEFVAYLIDPHTQREEPFNEHWQTVYSLCHPCHIHYDLVGKYETLEEDSNYVLRLAGVSGYLKFPTYAKSTRTTDEMTTEFFQNISAEHQTQLYEVYKLDFLMFNYSVPNYLKLD.

Over 1–16 (MKPALLEVMRMNRICR) the chain is Cytoplasmic. The chain crosses the membrane as a helical; Signal-anchor for type II membrane protein span at residues 17–37 (MVLATCLGSFILVIFYFQSML). The Lumenal portion of the chain corresponds to 38–352 (HPVMRRNPFG…YSVPNYLKLD (315 aa)). 3'-phosphoadenylyl sulfate contacts are provided by residues 124–130 (PKVACTN) and 186–194 (REPFERLVS). 4 N-linked (GlcNAc...) asparagine glycosylation sites follow: Asn-205, Asn-223, Asn-321, and Asn-342.

The protein belongs to the sulfotransferase 2 family. Post-translationally, N-glycosylated; required for activity and stability.

The protein resides in the golgi apparatus membrane. The catalysed reaction is chondroitin beta-D-glucuronate + n 3'-phosphoadenylyl sulfate = chondroitin 4'-sulfate + n adenosine 3',5'-bisphosphate + n H(+). In terms of biological role, catalyzes the transfer of sulfate to position 4 of the N-acetylgalactosamine (GalNAc) residue of chondroitin. Chondroitin sulfate constitutes the predominant proteoglycan present in cartilage and is distributed on the surfaces of many cells and extracellular matrices. Can also sulfate Gal residues in desulfated dermatan sulfate. Preferentially sulfates in GlcA-&gt;GalNAc unit than in IdoA-&gt;GalNAc unit. Does not form 4, 6-di-O-sulfated GalNAc when chondroitin sulfate C is used as an acceptor. This is Carbohydrate sulfotransferase 11 (Chst11) from Rattus norvegicus (Rat).